The following is a 294-amino-acid chain: Probable 2-(5''-triphosphoribosyl)-3'-dephosphocoenzyme-A synthase (294 aa).

This sequence belongs to the CitG/MdcB family.

The catalysed reaction is 3'-dephospho-CoA + ATP = 2'-(5''-triphospho-alpha-D-ribosyl)-3'-dephospho-CoA + adenine. The sequence is that of Probable 2-(5''-triphosphoribosyl)-3'-dephosphocoenzyme-A synthase from Streptococcus pyogenes serotype M28 (strain MGAS6180).